We begin with the raw amino-acid sequence, 713 residues long: Probable tRNA (uracil-O(2)-)-methyltransferase (713 aa).

Disordered stretches follow at residues 49-92 (TLRS…REGT) and 480-508 (LHSR…HDAG). Residue Ser-76 is modified to Phosphoserine. The span at 79-89 (GEPESGPRASR) shows a compositional bias: basic and acidic residues. The residue at position 489 (Ser-489) is a Phosphoserine. A C3H1-type zinc finger spans residues 669–698 (FKTRICWFFAHHPDGCVLPAAQCPFAHGPE).

This sequence belongs to the TRM44 family.

The protein localises to the cytoplasm. It catalyses the reaction uridine(44) in tRNA(Ser) + S-adenosyl-L-methionine = 2'-O-methyluridine(44) in tRNA(Ser) + S-adenosyl-L-homocysteine + H(+). Probable adenosyl-L-methionine (AdoMet)-dependent tRNA (uracil-O(2)-)-methyltransferase. The sequence is that of Probable tRNA (uracil-O(2)-)-methyltransferase (Trmt44) from Mus musculus (Mouse).